Here is a 643-residue protein sequence, read N- to C-terminus: 1-deoxy-D-xylulose-5-phosphate synthase (643 aa).

Thiamine diphosphate-binding positions include His-72 and 113-115; that span reads GHA. Residue Asp-144 coordinates Mg(2+). Thiamine diphosphate contacts are provided by residues 145-146, Asn-174, Tyr-287, and Glu-370; that span reads GA. Asn-174 provides a ligand contact to Mg(2+).

Belongs to the transketolase family. DXPS subfamily. Homodimer. Requires Mg(2+) as cofactor. It depends on thiamine diphosphate as a cofactor.

The enzyme catalyses D-glyceraldehyde 3-phosphate + pyruvate + H(+) = 1-deoxy-D-xylulose 5-phosphate + CO2. Its pathway is metabolic intermediate biosynthesis; 1-deoxy-D-xylulose 5-phosphate biosynthesis; 1-deoxy-D-xylulose 5-phosphate from D-glyceraldehyde 3-phosphate and pyruvate: step 1/1. Its function is as follows. Catalyzes the acyloin condensation reaction between C atoms 2 and 3 of pyruvate and glyceraldehyde 3-phosphate to yield 1-deoxy-D-xylulose-5-phosphate (DXP). The protein is 1-deoxy-D-xylulose-5-phosphate synthase of Synechococcus sp. (strain CC9605).